The primary structure comprises 623 residues: DNA polymerase alpha subunit B (623 aa).

A disordered region spans residues 113–151 (IPKIKDEPSSSVDVSTARNKNNHNNNNNNNPSLPNKSMF). The segment covering 121-130 (SSSVDVSTAR) has biased composition (polar residues).

The protein belongs to the DNA polymerase alpha subunit B family. In terms of assembly, DNA polymerase alpha:primase is a four subunit enzyme complex, which is assembled throughout the cell cycle, and consists of the two DNA polymerase subunits A and B, and the DNA primase large and small subunits. Subunit B binds to subunit A.

It localises to the nucleus. Its function is as follows. May play an essential role at the early stage of chromosomal DNA replication by coupling the polymerase alpha/primase complex to the cellular replication machinery. The sequence is that of DNA polymerase alpha subunit B (polA2) from Dictyostelium discoideum (Social amoeba).